Reading from the N-terminus, the 388-residue chain is Galactokinase (388 aa).

32 to 35 is a binding site for substrate; that stretch reads EHTD. ATP is bound by residues Ser-66 and 123–129; that span reads GASLSSS. Mg(2+) is bound by residues Ser-129 and Glu-161. Asp-173 functions as the Proton acceptor in the catalytic mechanism. Tyr-223 serves as a coordination point for substrate.

This sequence belongs to the GHMP kinase family. GalK subfamily.

The protein localises to the cytoplasm. The enzyme catalyses alpha-D-galactose + ATP = alpha-D-galactose 1-phosphate + ADP + H(+). Its pathway is carbohydrate metabolism; galactose metabolism. In terms of biological role, catalyzes the transfer of the gamma-phosphate of ATP to D-galactose to form alpha-D-galactose-1-phosphate (Gal-1-P). This Staphylococcus carnosus (strain TM300) protein is Galactokinase.